A 1344-amino-acid chain; its full sequence is Myb-binding protein 1A (1344 aa).

The interval 1-24 (MAEMKSPTKAEPASPAEAPQGDRR) is disordered. Ala-2 is subject to N-acetylalanine. The interval 2–580 (AEMKSPTKAE…WDQMMSTLKE (579 aa)) is interaction with MYB. Ser-14 carries the phosphoserine modification. An N6-acetyllysine mark is found at Lys-69 and Lys-156. 2 consecutive short sequence motifs (nuclear export signal) follow at residues 238–256 (SEDN…ANSV) and 261–279 (KLPD…ENKF). Disordered stretches follow at residues 696–752 (NEDE…DVDP) and 1150–1344 (PKSE…VQTP). The segment covering 708-730 (TDEKQLKHGEDADSDSEDSKNSE) has biased composition (basic and acidic residues). A compositionally biased stretch (acidic residues) spans 731 to 746 (SDVDSEDGEESEEEDR). Residues 1150–1161 (PKSEKKNVKDIP) are compositionally biased toward basic and acidic residues. Lys-1151 participates in a covalent cross-link: Glycyl lysine isopeptide (Lys-Gly) (interchain with G-Cter in SUMO2). The segment at 1154–1344 (KKNVKDIPSD…RVARRRVQTP (191 aa)) is required for nuclear and nucleolar localization. A phosphoserine mark is found at Ser-1162 and Ser-1166. Residues 1170–1187 (TKRKKKGFLPETKKRKKL) are compositionally biased toward basic residues. The residue at position 1189 (Ser-1189) is a Phosphoserine. Thr-1193 is subject to Phosphothreonine. 2 positions are modified to phosphoserine: Ser-1221 and Ser-1246. The segment covering 1247–1256 (PAPNNPTLSP) has biased composition (low complexity). At Thr-1253 the chain carries Phosphothreonine. The residue at position 1255 (Ser-1255) is a Phosphoserine. Phosphothreonine is present on residues Thr-1258 and Thr-1280. A phosphoserine mark is found at Ser-1283, Ser-1305, and Ser-1318. Residues 1301-1316 (VKRRSSQSALPKKRAR) show a composition bias toward basic residues. Residues 1317-1329 (LSLVSRSPSLLQS) are compositionally biased toward low complexity. Position 1322 is a citrulline (Arg-1322). Residues Ser-1323, Ser-1325, and Ser-1329 each carry the phosphoserine modification. Over residues 1331–1344 (IRKRRVARRRVQTP) the composition is skewed to basic residues.

The protein belongs to the MYBBP1A family. As to quaternary structure, binds to and represses JUN and MYB via the leucine zipper regions present in these proteins. Also binds to and represses PPARGC1A: this interaction is abrogated when PPARGC1A is phosphorylated by MAPK1/ERK. Binds to and stimulates transcription by AHR. Binds to KPNA2. Component of the B-WICH complex, at least composed of SMARCA5/SNF2H, BAZ1B/WSTF, SF3B1, DEK, MYO1C, ERCC6, MYBBP1A and DDX21. Interacts with CLOCK and CRY1. Citrullinated by PADI4.

The protein localises to the nucleus. Its subcellular location is the nucleolus. The protein resides in the cytoplasm. May activate or repress transcription via interactions with sequence specific DNA-binding proteins. Repression may be mediated at least in part by histone deacetylase activity (HDAC activity). Acts as a corepressor and in concert with CRY1, represses the transcription of the core circadian clock component PER2. Preferentially binds to dimethylated histone H3 'Lys-9' (H3K9me2) on the PER2 promoter. Has a role in rRNA biogenesis together with PWP1. The protein is Myb-binding protein 1A (Mybbp1a) of Rattus norvegicus (Rat).